We begin with the raw amino-acid sequence, 191 residues long: Guanylate kinase (191 aa).

One can recognise a Guanylate kinase-like domain in the interval Gly-10–Gly-188. An ATP-binding site is contributed by Gly-17–Gly-24.

The protein belongs to the guanylate kinase family.

It localises to the cytoplasm. The enzyme catalyses GMP + ATP = GDP + ADP. In terms of biological role, essential for recycling GMP and indirectly, cGMP. This is Guanylate kinase (gmk) from Synechocystis sp. (strain ATCC 27184 / PCC 6803 / Kazusa).